Consider the following 145-residue polypeptide: MALRLLLGFDYGTKQIGVAVGQVITGQARELCTLKAQNGVPDWNQVEALIKEWKPDAVVVGLPLNMDGTPSDMCLRAEKFARRLNGRYNLPFYTHDERLTTFEAKGERLVRGGQKGSYRDNPVDAIAAALLLQGWLDANAALFET.

This sequence belongs to the YqgF nuclease family.

Its subcellular location is the cytoplasm. In terms of biological role, could be a nuclease involved in processing of the 5'-end of pre-16S rRNA. This chain is Putative pre-16S rRNA nuclease, found in Pseudomonas fluorescens.